The chain runs to 365 residues: Galactoside alpha-(1,2)-fucosyltransferase 1 (365 aa).

At 1–8 (MWVPSRRH) the chain is on the cytoplasmic side. The helical; Signal-anchor for type II membrane protein transmembrane segment at 9–28 (LCLTFLLVCVLAAIFFLNVY) threads the bilayer. Over 29-365 (QDLFYSGLDL…LSPLQMLAGP (337 aa)) the chain is Lumenal. Residues asparagine 65, asparagine 301, and asparagine 327 are each glycosylated (N-linked (GlcNAc...) asparagine).

This sequence belongs to the glycosyltransferase 11 family.

The protein localises to the golgi apparatus. It localises to the golgi stack membrane. The catalysed reaction is a beta-D-galactosyl-(1-&gt;4)-N-acetyl-beta-D-glucosaminyl derivative + GDP-beta-L-fucose = an alpha-L-Fuc-(1-&gt;2)-beta-D-Gal-(1-&gt;4)-beta-D-GlcNAc derivative + GDP + H(+). It catalyses the reaction a ganglioside GA1 + GDP-beta-L-fucose = a ganglioside Fuc-GA1 + GDP + H(+). The enzyme catalyses a beta-D-Gal-(1-&gt;3)-beta-D-GlcNAc-(1-&gt;3)-beta-D-Gal-(1-&gt;4)-beta-D-Glc-(1&lt;-&gt;1')-Cer(d18:1(4E)) + GDP-beta-L-fucose = alpha-L-fucosyl-(1-&gt;2)- beta-D-galactosyl-(1-&gt;3)-N-acetyl-beta-D-glucosaminyl-(1-&gt;3)-beta-D-galactosyl-(1-&gt;4)-beta-D-glucosyl-(1&lt;-&gt;1')-N-acylsphing-4-enine + GDP + H(+). It carries out the reaction a neolactoside nLc4Cer(d18:1(4E)) + GDP-beta-L-fucose = a neolactoside IV(2)-alpha-Fuc-nLc4Cer(d18:1(4E)) + GDP + H(+). The catalysed reaction is a ganglioside GM1 + GDP-beta-L-fucose = a ganglioside Fuc-GM1 + GDP + H(+). It catalyses the reaction beta-D-galactosyl-(1-&gt;3)-N-acetyl-D-galactosamine + GDP-beta-L-fucose = alpha-L-fucosyl-(1-&gt;2)-beta-D-galactosyl-(1-&gt;3)-N-acetyl-D-galactosamine + GDP + H(+). It participates in protein modification; protein glycosylation. Functionally, catalyzes the transfer of L-fucose, from a guanosine diphosphate-beta-L-fucose, to the terminal galactose residue of glycoconjugates through an alpha(1,2) linkage leading to H antigen synthesis that is an intermediate substrate in the synthesis of ABO blood group antigens. H antigen is essential for maturation of the glomerular layer of the main olfactory bulb, in cell migration and early cell-cell contacts during tumor associated angiogenesis. Preferentially fucosylates soluble lactose and to a lesser extent fucosylates glycolipids gangliosides GA1 and GM1a. The protein is Galactoside alpha-(1,2)-fucosyltransferase 1 of Sus scrofa (Pig).